A 168-amino-acid chain; its full sequence is Phosphopantetheine adenylyltransferase (168 aa).

Position 11 (threonine 11) interacts with substrate. Residues 11–12 (TF) and histidine 19 each bind ATP. Residues lysine 43, threonine 75, and arginine 89 each contribute to the substrate site. ATP-binding positions include 90 to 92 (GIR), glutamate 100, and 125 to 131 (WSYMSSS).

Belongs to the bacterial CoaD family. Homohexamer. Mg(2+) serves as cofactor.

The protein localises to the cytoplasm. It carries out the reaction (R)-4'-phosphopantetheine + ATP + H(+) = 3'-dephospho-CoA + diphosphate. It participates in cofactor biosynthesis; coenzyme A biosynthesis; CoA from (R)-pantothenate: step 4/5. In terms of biological role, reversibly transfers an adenylyl group from ATP to 4'-phosphopantetheine, yielding dephospho-CoA (dPCoA) and pyrophosphate. The sequence is that of Phosphopantetheine adenylyltransferase from Wigglesworthia glossinidia brevipalpis.